Consider the following 431-residue polypeptide: Protein farnesyltransferase subunit beta (431 aa).

PFTB repeat units follow at residues 130-171, 182-224, 231-273, 280-322, and 332-375; these read KRKI…SLCD, RKGI…TLLN, TEGV…AILR, VEKL…AILE, and KHAL…AVAE. Residues 258–261 and 301–304 contribute to the (2E,6E)-farnesyl diphosphate site; these read HGGY and RSNK. Residues Asp-307 and Cys-309 each coordinate Zn(2+). 310–313 is a binding site for (2E,6E)-farnesyl diphosphate; that stretch reads YSFW. His-363 provides a ligand contact to Zn(2+).

The protein belongs to the protein prenyltransferase subunit beta family. As to quaternary structure, heterodimer of an alpha (RAM2) and a beta (RAM1) subunit. Zn(2+) serves as cofactor.

It is found in the cytoplasm. It carries out the reaction L-cysteinyl-[protein] + (2E,6E)-farnesyl diphosphate = S-(2E,6E)-farnesyl-L-cysteinyl-[protein] + diphosphate. Its function is as follows. Catalyzes the transfer of a farnesyl moiety from farnesyl diphosphate to a cysteine at the fourth position from the C-terminus of several proteins having the C-terminal sequence Cys-aliphatic-aliphatic-X where X is Ser, Ala, Met, Cys, or Gln. Required for the membrane localization of proteins such as a-factor, Ras proteins and other membrane proteins containing the C-terminal CAAX motif. The beta subunit is responsible for isoprenoid and peptide-binding. The protein is Protein farnesyltransferase subunit beta of Saccharomyces cerevisiae (strain ATCC 204508 / S288c) (Baker's yeast).